The chain runs to 465 residues: Poly(A) polymerase I (465 aa).

Residues aspartate 80, aspartate 82, and aspartate 162 contribute to the active site. The tract at residues 429–465 (SAPPDQKGMLNELDEEPSPRRRTRRPRKRAPRREGTA) is disordered. Positions 448–459 (RRRTRRPRKRAP) are enriched in basic residues.

The protein belongs to the tRNA nucleotidyltransferase/poly(A) polymerase family.

The enzyme catalyses RNA(n) + ATP = RNA(n)-3'-adenine ribonucleotide + diphosphate. In terms of biological role, adds poly(A) tail to the 3' end of many RNAs, which usually targets these RNAs for decay. Plays a significant role in the global control of gene expression, through influencing the rate of transcript degradation, and in the general RNA quality control. The protein is Poly(A) polymerase I of Escherichia coli O157:H7.